Consider the following 713-residue polypeptide: MAAGVSLVSDLPYSTSRESNTDMETVNVRVPTAKYTKVGETLRHVIPGHMQCSMACGGRACKYENPSRWSDKEQAVKGLYSSWITDHLLAMARPSTEIVEKFNIIEQFHVCGLKTVINLQRPGEHASCGSTLEPESGFTYRPELFMEAGIYFYNFGWKDYGVASLTTILDMVKVMSFAMQEGKIAVHCHAGLGRTGVLIACFLVFTSRMSADQAILFVRAKRPNSIQTRGQLLCVREFAQFLVPLRSVFSCAEPKAHEVTLSQYLTRQRHLLHGYEARHMKNMPKIIHLICRLLLDIAENRQTVEEEVLEIPDLTEEVEKTVSLQALQQLGKEMRGKGIPISSPRSPDQPNLLGTPCDPPHDQPLCSDQEFDVLWRWPTVDNTYRSRLILSKCFSYSDSALHKLDPRVHVLQSPQNLSSKSGLNFSELYASQSRLALETPDLLPSDIKSSPKHDLLTGSRSSLVQSKKIEEQVSCPPASVKQAPLKVAKRSMSYGFLGRTNDSSTMFSICQVGRSTNKNSNCDVTQHFKDVPILTLQSELSPETRHLFVAKALTVDLDGEELRSKVSVWQMELNSREGAWERLCNERDPVVLSLLMWSWLEQLKEPVITKDDVETLSGNRLNPEHALNSLDKGQKQTLLCILDCAAHLLKIPEEVENAFFERLIKAFTWISSDSENGQLIYKALKDVMVPVLRDLRTKAMEELEFTCHCSFVP.

The Tyrosine-protein phosphatase domain occupies 80-251; sequence YSSWITDHLL…LVPLRSVFSC (172 aa). Catalysis depends on Cys-188, which acts as the Phosphocysteine intermediate.

Belongs to the protein-tyrosine phosphatase family. Non-receptor class PTPDC1 subfamily.

Its function is as follows. May play roles in cilia formation and/or maintenance. In Danio rerio (Zebrafish), this protein is Protein tyrosine phosphatase domain-containing protein 1 (ptpdc1).